Reading from the N-terminus, the 348-residue chain is NADH-quinone oxidoreductase subunit H (348 aa).

A run of 9 helical transmembrane segments spans residues 13–33 (LIMVGQSLLLLVCLLVAIAFL), 50–70 (PNVVGPFGLFQSFADLLKFIL), 82–102 (AVFLLAPLVAVTLALATYAVI), 115–135 (VGILYIFAISSLEVYGIIMGG), 161–181 (IGLVIVTVLLCVGSLNLTDIV), 198–218 (FLDWHWLSLFPMFIVFFISGL), 258–278 (AIVLICCLTTILFLGGWLPIV), 285–305 (WVPGIVWFALKGCMVFFMIAL), and 321–341 (LGWKVFLPLSLAMVVIVAFVL).

The protein belongs to the complex I subunit 1 family. In terms of assembly, NDH-1 is composed of 14 different subunits. Subunits NuoA, H, J, K, L, M, N constitute the membrane sector of the complex.

The protein resides in the cell inner membrane. It carries out the reaction a quinone + NADH + 5 H(+)(in) = a quinol + NAD(+) + 4 H(+)(out). In terms of biological role, NDH-1 shuttles electrons from NADH, via FMN and iron-sulfur (Fe-S) centers, to quinones in the respiratory chain. The immediate electron acceptor for the enzyme in this species is believed to be ubiquinone. Couples the redox reaction to proton translocation (for every two electrons transferred, four hydrogen ions are translocated across the cytoplasmic membrane), and thus conserves the redox energy in a proton gradient. This subunit may bind ubiquinone. This is NADH-quinone oxidoreductase subunit H from Agrobacterium fabrum (strain C58 / ATCC 33970) (Agrobacterium tumefaciens (strain C58)).